The primary structure comprises 170 residues: Small ribosomal subunit protein eS7 (170 aa).

This sequence belongs to the eukaryotic ribosomal protein eS7 family. Component of the small ribosomal subunit.

The protein resides in the cytoplasm. In Encephalitozoon cuniculi (strain GB-M1) (Microsporidian parasite), this protein is Small ribosomal subunit protein eS7 (RPS7).